The sequence spans 123 residues: Class II hydrophobin 2 (123 aa).

An N-terminal signal peptide occupies residues 1-16; sequence MRSFLVIATLAVGAFG. Cystine bridges form between cysteine 22–cysteine 70, cysteine 32–cysteine 61, cysteine 33–cysteine 45, and cysteine 71–cysteine 82.

It belongs to the cerato-ulmin hydrophobin family. In terms of assembly, homodimer. Homodimers further self-assemble to form highly ordered films at water-air interfaces through intermolecular interactions.

The protein resides in the secreted. It localises to the cell wall. Aerial growth, conidiation, and dispersal of filamentous fungi in the environment rely upon a capability of their secreting small amphipathic proteins called hydrophobins (HPBs) with low sequence identity. Class I can self-assemble into an outermost layer of rodlet bundles on aerial cell surfaces, conferring cellular hydrophobicity that supports fungal growth, development and dispersal; whereas Class II form highly ordered films at water-air interfaces through intermolecular interactions but contribute nothing to the rodlet structure. Hyd2 is a class II hydrophobin that plays probably a role in intraspecific signaling or hyphal fusion. Not necessary for root adhesion and colonization. Might play an essential role since no deletion mutants could be obtained. The sequence is that of Class II hydrophobin 2 from Bionectria ochroleuca (Gliocladium roseum).